A 315-amino-acid chain; its full sequence is Zinc metalloproteinase nas-4 (315 aa).

The first 20 residues, 1–20, serve as a signal peptide directing secretion; it reads MMTIQRYSLVFCAIFATCWT. Asn-71 carries N-linked (GlcNAc...) asparagine glycosylation. The region spanning 95–290 is the Peptidase M12A domain; sequence NAIKQIYRRW…RKINKLYNCP (196 aa). 2 disulfides stabilise this stretch: Cys-137/Cys-289 and Cys-160/Cys-179. His-187 provides a ligand contact to Zn(2+). Glu-188 is an active-site residue. The Zn(2+) site is built by His-191 and His-197. Residues 291–315 are disordered; the sequence is GVSGNNNNNNNNQINSNSIVNHPQV.

Zn(2+) serves as cofactor. In terms of tissue distribution, digestive tract. Found in the pharynx cells of the procorpus, metacorpus, isthmus and terminal bulb, and in the terminal bulb lumen.

The protein localises to the secreted. Metalloprotease. May be involved in digestion. This chain is Zinc metalloproteinase nas-4 (nas-4), found in Caenorhabditis elegans.